Consider the following 489-residue polypeptide: Dihydropyrimidinase 1 (489 aa).

His-61, His-63, and Lys-156 together coordinate Zn(2+). N6-carboxylysine is present on Lys-156. Tyr-161 lines the substrate pocket. Positions 189 and 245 each coordinate Zn(2+). Residue Ser-295 participates in substrate binding. Asp-323 provides a ligand contact to Zn(2+). Asn-344 is a substrate binding site.

The protein belongs to the metallo-dependent hydrolases superfamily. Hydantoinase/dihydropyrimidinase family. Homotetramer. The cofactor is Zn(2+). Post-translationally, carboxylation allows a single lysine to coordinate two zinc ions.

The protein resides in the nucleus. The enzyme catalyses 5,6-dihydrouracil + H2O = 3-(carbamoylamino)propanoate + H(+). The sequence is that of Dihydropyrimidinase 1 (dhp-1) from Caenorhabditis briggsae.